We begin with the raw amino-acid sequence, 179 residues long: Probable chorismate pyruvate-lyase (179 aa).

Residues arginine 82, leucine 120, and glutamate 165 each coordinate substrate.

Belongs to the UbiC family.

It localises to the cytoplasm. It catalyses the reaction chorismate = 4-hydroxybenzoate + pyruvate. It participates in cofactor biosynthesis; ubiquinone biosynthesis. Its function is as follows. Removes the pyruvyl group from chorismate, with concomitant aromatization of the ring, to provide 4-hydroxybenzoate (4HB) for the ubiquinone pathway. This Vibrio cholerae serotype O1 (strain ATCC 39315 / El Tor Inaba N16961) protein is Probable chorismate pyruvate-lyase.